The sequence spans 280 residues: Bis(5'-nucleosyl)-tetraphosphatase, symmetrical (280 aa).

It belongs to the Ap4A hydrolase family.

It catalyses the reaction P(1),P(4)-bis(5'-adenosyl) tetraphosphate + H2O = 2 ADP + 2 H(+). Hydrolyzes diadenosine 5',5'''-P1,P4-tetraphosphate to yield ADP. This Shigella boydii serotype 18 (strain CDC 3083-94 / BS512) protein is Bis(5'-nucleosyl)-tetraphosphatase, symmetrical.